A 274-amino-acid chain; its full sequence is Ubiquinone biosynthesis protein COQ4 homolog, mitochondrial (274 aa).

A mitochondrion-targeting transit peptide spans 1 to 20; that stretch reads MLRQTAFRSMKLNRTPGRYF. The interval 13–40 is disordered; sequence NRTPGRYFTTAENMDTGSSQSPPDTEQK. Over residues 22 to 36 the composition is skewed to polar residues; it reads TAENMDTGSSQSPPD. His177, Asp178, His181, and Glu193 together coordinate Zn(2+).

The protein belongs to the COQ4 family. In terms of assembly, component of a multi-subunit COQ enzyme complex. It depends on Zn(2+) as a cofactor.

Its subcellular location is the mitochondrion inner membrane. The enzyme catalyses a 4-hydroxy-3-methoxy-5-(all-trans-polyprenyl)benzoate + H(+) = a 2-methoxy-6-(all-trans-polyprenyl)phenol + CO2. It participates in cofactor biosynthesis; ubiquinone biosynthesis. Its function is as follows. Lyase that catalyzes the C1-decarboxylation of 4-hydroxy-3-methoxy-5-(all-trans-polyprenyl)benzoic acid into 2-methoxy-6-(all-trans-polyprenyl)phenol during ubiquinone biosynthesis. This is Ubiquinone biosynthesis protein COQ4 homolog, mitochondrial from Aedes aegypti (Yellowfever mosquito).